Consider the following 105-residue polypeptide: Large ribosomal subunit protein uL24 (105 aa).

The protein belongs to the universal ribosomal protein uL24 family. Part of the 50S ribosomal subunit.

Its function is as follows. One of two assembly initiator proteins, it binds directly to the 5'-end of the 23S rRNA, where it nucleates assembly of the 50S subunit. One of the proteins that surrounds the polypeptide exit tunnel on the outside of the subunit. This is Large ribosomal subunit protein uL24 from Mycolicibacterium smegmatis (strain ATCC 700084 / mc(2)155) (Mycobacterium smegmatis).